The following is a 142-amino-acid chain: Thioredoxin-like protein 4A (142 aa).

C38 and C79 are disulfide-bonded. The residue at position 132 (S132) is a Phosphoserine.

It belongs to the DIM1 family. Component of the precatalytic spliceosome (spliceosome B complex). Component of the U5 snRNP complex. Component of the U4/U6-U5 tri-snRNP complex. The U4/U6-U5 tri-snRNP complex is a building block of the precatalytic spliceosome (spliceosome B complex). The U4/U6-U5 tri-snRNP complex is composed of the U4, U6 and U5 snRNAs and at least PRPF3, PRPF4, PRPF6, PRPF8, PRPF31, SNRNP200, TXNL4A, SNRNP40, SNRPB, SNRPD1, SNRPD2, SNRPD3, SNRPE, SNRPF, SNRPG, DDX23, CD2BP2, PPIH, SNU13, EFTUD2, SART1 and USP39, plus LSM2, LSM3, LSM4, LSM5, LSM6, LSM7 and LSM8. Directly interacts with CD2BP2. Interacts with HNRPF, HNRPH2, NEDD9 and PQBP1. Interacts with ERBB4. The disulfide bond seen in structures determined by X-ray crystallography and NMR is not essential for protein folding and function.

Its subcellular location is the nucleus. In terms of biological role, plays a role in pre-mRNA splicing as component of the U5 snRNP and U4/U6-U5 tri-snRNP complexes that are involved in spliceosome assembly, and as component of the precatalytic spliceosome (spliceosome B complex). The chain is Thioredoxin-like protein 4A (TXNL4A) from Homo sapiens (Human).